We begin with the raw amino-acid sequence, 169 residues long: Small ribosomal subunit protein uS5 (169 aa).

The region spanning 13 to 76 (LVEKLVSVRR…EKARRNMKDV (64 aa)) is the S5 DRBM domain.

It belongs to the universal ribosomal protein uS5 family. As to quaternary structure, part of the 30S ribosomal subunit. Contacts proteins S4 and S8.

With S4 and S12 plays an important role in translational accuracy. Its function is as follows. Located at the back of the 30S subunit body where it stabilizes the conformation of the head with respect to the body. This chain is Small ribosomal subunit protein uS5, found in Hydrogenovibrio crunogenus (strain DSM 25203 / XCL-2) (Thiomicrospira crunogena).